A 127-amino-acid polypeptide reads, in one-letter code: Small ribosomal subunit protein eS6 (127 aa).

It belongs to the eukaryotic ribosomal protein eS6 family.

The chain is Small ribosomal subunit protein eS6 from Picrophilus torridus (strain ATCC 700027 / DSM 9790 / JCM 10055 / NBRC 100828 / KAW 2/3).